A 160-amino-acid polypeptide reads, in one-letter code: Type IV major fimbrial protein FimA (160 aa).

The propeptide at 1-7 (MKSLQKG) is leader sequence. F8 carries the post-translational modification N-methylphenylalanine. The chain crosses the membrane as a helical span at residues 8 to 28 (FTLIELMIVVAIIGILAAFAI). C63 and C105 are oxidised to a cystine.

It belongs to the N-Me-Phe pilin family. As to quaternary structure, the pili are polar flexible filaments of about 5.4 nanometers diameter and 2.5 micrometers average length; they consist of only a single polypeptide chain arranged in a helical configuration of five subunits per turn in the assembled pilus.

Its subcellular location is the fimbrium. The protein resides in the membrane. Functionally, major component of the type IV fimbriae that plays an essential role in twitching motility, natural transformation, and protease secretion. The chain is Type IV major fimbrial protein FimA (fimA) from Dichelobacter nodosus (Bacteroides nodosus).